A 403-amino-acid polypeptide reads, in one-letter code: NADH-quinone oxidoreductase subunit D (403 aa).

The protein belongs to the complex I 49 kDa subunit family. NDH-1 is composed of 14 different subunits. Subunits NuoB, C, D, E, F, and G constitute the peripheral sector of the complex.

It localises to the cell membrane. It catalyses the reaction a quinone + NADH + 5 H(+)(in) = a quinol + NAD(+) + 4 H(+)(out). Its function is as follows. NDH-1 shuttles electrons from NADH, via FMN and iron-sulfur (Fe-S) centers, to quinones in the respiratory chain. The immediate electron acceptor for the enzyme in this species is believed to be a menaquinone. Couples the redox reaction to proton translocation (for every two electrons transferred, four hydrogen ions are translocated across the cytoplasmic membrane), and thus conserves the redox energy in a proton gradient. This is NADH-quinone oxidoreductase subunit D from Amoebophilus asiaticus (strain 5a2).